An 85-amino-acid chain; its full sequence is MSLLDYFKSKKKPSTAVMAKERLQIIVAHQRGQRDTPDYFPQMKQEIIAVIRKYVHISDDQVSVQLDQNDDNLSVLELNVTLPDR.

This sequence belongs to the MinE family.

Its function is as follows. Prevents the cell division inhibition by proteins MinC and MinD at internal division sites while permitting inhibition at polar sites. This ensures cell division at the proper site by restricting the formation of a division septum at the midpoint of the long axis of the cell. In Shewanella sp. (strain ANA-3), this protein is Cell division topological specificity factor.